The primary structure comprises 233 residues: Putative N-acetylmannosamine-6-phosphate 2-epimerase (233 aa).

It belongs to the NanE family.

It carries out the reaction an N-acyl-D-glucosamine 6-phosphate = an N-acyl-D-mannosamine 6-phosphate. Its pathway is amino-sugar metabolism; N-acetylneuraminate degradation; D-fructose 6-phosphate from N-acetylneuraminate: step 3/5. In terms of biological role, converts N-acetylmannosamine-6-phosphate (ManNAc-6-P) to N-acetylglucosamine-6-phosphate (GlcNAc-6-P). The polypeptide is Putative N-acetylmannosamine-6-phosphate 2-epimerase (Yersinia pestis bv. Antiqua (strain Antiqua)).